The chain runs to 429 residues: MTSDRFFRLDAGYQQYDWGKIGSSSAVAKFAAHSDPSVKIDETKPYAELWMGTHSKLPSVNHETKATLNDILAKNSQELIGEDVINKFKSTNELPFLFKVLSIEKVLSIQAHPDKELGKKLHMEDPKNYPDDNHKPEMAVAITEFEGFCGFKPLEEIADELETIPEFRDVVGDEVANEFIQNYKTGVENSSSACANNKKLLQKVFEKVMTAPCDILEKNADGMAKRANENPSSFKSSDLPELVVRLNRQFPKDVGLFCGCLMLNHCKLQPGQALFLEAKDPHAYICGDIIECMAASDNVVRAGFTPKFKDVKNLVEMLTYRYDPVEKQVMSAEEFPRAGGDGATIMYNPPIAEFSVLETTFKNKTGKATVEGLKGPSIVITTAGEGYISADGQKLKAEPGFVFFIGANVPVELETTDKDFTTYRAFVEA.

4 residues coordinate Zn(2+): Q110, H112, E137, and H282. R301 is an active-site residue.

The protein belongs to the mannose-6-phosphate isomerase type 1 family. Zn(2+) is required as a cofactor.

It localises to the cytoplasm. It carries out the reaction D-mannose 6-phosphate = D-fructose 6-phosphate. The protein operates within nucleotide-sugar biosynthesis; GDP-alpha-D-mannose biosynthesis; alpha-D-mannose 1-phosphate from D-fructose 6-phosphate: step 1/2. In terms of biological role, involved in the synthesis of the GDP-mannose and dolichol-phosphate-mannose required for a number of critical mannosyl transfer reactions. This Candida glabrata (strain ATCC 2001 / BCRC 20586 / JCM 3761 / NBRC 0622 / NRRL Y-65 / CBS 138) (Yeast) protein is Mannose-6-phosphate isomerase (PMI1).